The primary structure comprises 273 residues: Rho GTPase-activating protein gacB (273 aa).

The Rho-GAP domain maps to 1-192; the sequence is MTDQTLRLEN…YLISHFNEIF (192 aa).

It localises to the cytoplasm. Rho GTPase-activating protein involved in the signal transduction pathway. This chain is Rho GTPase-activating protein gacB (gacB), found in Dictyostelium discoideum (Social amoeba).